Consider the following 26-residue polypeptide: Histone H2B.1, sperm (26 aa).

The segment at 1-26 (MPSQKSPTKRSPTKRSPQKGGKGAKR) is disordered. Short sequence motifs (SPKK motif) lie at residues 6-9 (SPTK), 11-14 (SPTK), and 16-19 (SPQK). Over residues 7–26 (PTKRSPTKRSPQKGGKGAKR) the composition is skewed to basic residues. Residues serine 11 and serine 16 each carry the phosphoserine modification.

The protein belongs to the histone H2B family. In terms of assembly, the nucleosome is a histone octamer containing two molecules each of H2A, H2B, H3 and H4 assembled in one H3-H4 heterotetramer and two H2A-H2B heterodimers. The octamer wraps approximately 147 bp of DNA. In terms of processing, monoubiquitination gives a specific tag for epigenetic transcriptional activation and is also prerequisite for histone H3 'Lys-4' and 'Lys-79' methylation. Phosphorylated on SPKK motifs 2 and 3; which may regulate DNA binding. Dephosphorylated during maturation of spermatids to mature sperm and rephosphorylated at fertilization.

The protein resides in the nucleus. It localises to the chromosome. Its function is as follows. Core component of nucleosome. Nucleosomes wrap and compact DNA into chromatin, limiting DNA accessibility to the cellular machineries which require DNA as a template. Histones thereby play a central role in transcription regulation, DNA repair, DNA replication and chromosomal stability. DNA accessibility is regulated via a complex set of post-translational modifications of histones, also called histone code, and nucleosome remodeling. This Echinus esculentus (Sea urchin) protein is Histone H2B.1, sperm.